A 384-amino-acid chain; its full sequence is MSGCDSICAATAPPHVRAIAPYQPGKPISELARELGLAEADIVKLASNENPLGPSPFALAAAQDALLDMALYPDGAGYALKAKLSARLGVDAAQIVLGNGSNDVLDMVARAYLAPGTSAVYAQYAFAVYPIATHTVGAHGIAVAARDFGHDLERMRAAIRDDTRVVWIANPNNPTGTFLPWNEIEAFLETVPPRVLVVLDEAYGEYLAPASRCDTAAWVVRFPNLLISRTFSKAYGLAGLRVGYGIGHADVVDLLNRVRHPFNVNASALAAAEAALDDDAFLARSYALNAAGMQQLLGGLAALDIETVPSKGNFVLARVGDAARINTELLKRGVIVRPVAAYGLPEFLRVSVGLAGQNARFLDALGEVLAAAPGRHPDSRKALP.

Lys233 carries the post-translational modification N6-(pyridoxal phosphate)lysine.

It belongs to the class-II pyridoxal-phosphate-dependent aminotransferase family. Histidinol-phosphate aminotransferase subfamily. As to quaternary structure, homodimer. Pyridoxal 5'-phosphate serves as cofactor.

It carries out the reaction L-histidinol phosphate + 2-oxoglutarate = 3-(imidazol-4-yl)-2-oxopropyl phosphate + L-glutamate. It participates in amino-acid biosynthesis; L-histidine biosynthesis; L-histidine from 5-phospho-alpha-D-ribose 1-diphosphate: step 7/9. This is Histidinol-phosphate aminotransferase 1 from Thiobacillus denitrificans (strain ATCC 25259 / T1).